A 747-amino-acid polypeptide reads, in one-letter code: DNA ligase (747 aa).

NAD(+) contacts are provided by residues 113–117 (DRAYD), 161–162 (SI), and E190. K192 acts as the N6-AMP-lysine intermediate in catalysis. NAD(+) is bound by residues R213, E249, K364, and K388. Residues C479, C482, C495, and C501 each coordinate Zn(2+). One can recognise a BRCT domain in the interval 660-747 (TTNAPLSDLT…EHDDTLTWPP (88 aa)).

Belongs to the NAD-dependent DNA ligase family. LigA subfamily. Mg(2+) serves as cofactor. Mn(2+) is required as a cofactor.

The enzyme catalyses NAD(+) + (deoxyribonucleotide)n-3'-hydroxyl + 5'-phospho-(deoxyribonucleotide)m = (deoxyribonucleotide)n+m + AMP + beta-nicotinamide D-nucleotide.. Its function is as follows. DNA ligase that catalyzes the formation of phosphodiester linkages between 5'-phosphoryl and 3'-hydroxyl groups in double-stranded DNA using NAD as a coenzyme and as the energy source for the reaction. It is essential for DNA replication and repair of damaged DNA. The chain is DNA ligase from Haloquadratum walsbyi (strain DSM 16790 / HBSQ001).